Here is a 1182-residue protein sequence, read N- to C-terminus: IQ motif and SEC7 domain-containing protein 3 (1182 aa).

Positions 20–56 form a coiled coil; the sequence is AIVQNQQSLIHTQRERIDELERRLDELSAENRSLWEH. Disordered regions lie at residues 62-157 and 230-275; these read AQPP…ERPP and AAGR…RQQP. Pro residues predominate over residues 63-78; that stretch reads QPPPGLVPPSSAPLPA. Composition is skewed to low complexity over residues 79-105 and 254-263; these read APAT…AAAP and GAGAASPRAG. Position 259 is a phosphoserine (serine 259). In terms of domain architecture, IQ spans 315–344; the sequence is SRRAACTIQTAFRQYQLSKNFEKIRNSLLE. Disordered stretches follow at residues 444–479 and 521–616; these read AGPP…AHSG and EPAA…ASAS. Positions 533 to 548 are enriched in basic and acidic residues; it reads SGREAPEAPAVGREDA. A compositionally biased stretch (low complexity) spans 555 to 569; that stretch reads AEAAASGAADGATAP. Residues 572–581 show a composition bias toward acidic residues; that stretch reads EEEEEEEETA. The span at 598–616 shows a compositional bias: low complexity; sequence SSSSTSTKSAKSGSEASAS. The SEC7 domain maps to 644–837; the sequence is TLSTDTLRKR…VGIYERIQQK (194 aa). Positions 850–983 constitute a PH domain; sequence TKVEKSIVGM…LKESIAEVTE (134 aa). Positions 964–992 form a coiled coil; sequence SDEMQKFVEDLKESIAEVTELEQIRIEWE. Disordered regions lie at residues 1002–1090 and 1121–1182; these read LSFK…PGTL and YTSS…RSLV. Positions 1022–1033 are enriched in basic and acidic residues; it reads AKREAALRERPA. A compositionally biased stretch (polar residues) spans 1043-1052; that stretch reads NRLQTSQHNS. Over residues 1061 to 1087 the composition is skewed to pro residues; it reads PVPPPDLQPSPPRQQTPPLPPPPPTPP. Residues 1121–1132 are compositionally biased toward low complexity; that stretch reads YTSSSSDSCGST. The segment covering 1147–1157 has biased composition (pro residues); that stretch reads PPLPPPPPPYN.

Belongs to the BRAG family. In terms of assembly, interacts with DLG1 and DLG4. Interacts with GPHN. Expressed specifically in the adult brain, predominantly in the cerebral cortex and the olfactory bulb, but not in the fetal brain. Expressed only in mature neurons, but not in undifferentiated neural stem precursor cells (NSPCs), nor in glioma cells.

It is found in the cytoplasm. The protein resides in the postsynaptic density. Functionally, acts as a guanine nucleotide exchange factor (GEF) for ARF1. The protein is IQ motif and SEC7 domain-containing protein 3 (IQSEC3) of Homo sapiens (Human).